The chain runs to 430 residues: MKRMKLRTNAGPLQGTIQVPGDKSISHRAVILGAVAKGETRVKGLLKGEDVLSTIQAFRNLGVRIEEKDDQLVIEGQGFQGLNAPCQTLNMGNSGTSMRLIAGLLAGQPFSVKMIGDESLSKRPMDRIVYPLKQMGVEISGETDRQFPPLQLQGNRNLQPITYTLPISSAQVKSAILLAALQAKGTTQVVEKEITRNHTEEMIQQFGGRLIVDGKRITLVGPQQLTAQEITVPGDISSAAFWLVAGLIIPGSELLLKNVGVNPTRTGILEVVEKMGAQIAYEDMNKKEQVTSIRVVYSHLKGTIISGGLIPRLIDELPIIALLATQAQGTTCIKDAQELRVKETDRIQVVTDILNSMGANIKATADGMIIKGPTVLYGANTSTYGDHRIGMMTAIAALLVKQGQVHLDKEEAIMTSYPTFFKDLERLCHD.

3-phosphoshikimate is bound by residues K23, S24, and R28. K23 serves as a coordination point for phosphoenolpyruvate. The phosphoenolpyruvate site is built by G95 and R123. 3-phosphoshikimate is bound by residues S169, Q171, D315, and K342. Q171 is a binding site for phosphoenolpyruvate. D315 functions as the Proton acceptor in the catalytic mechanism. Phosphoenolpyruvate contacts are provided by R346 and R388.

The protein belongs to the EPSP synthase family. As to quaternary structure, monomer.

Its subcellular location is the cytoplasm. It carries out the reaction 3-phosphoshikimate + phosphoenolpyruvate = 5-O-(1-carboxyvinyl)-3-phosphoshikimate + phosphate. It participates in metabolic intermediate biosynthesis; chorismate biosynthesis; chorismate from D-erythrose 4-phosphate and phosphoenolpyruvate: step 6/7. Functionally, catalyzes the transfer of the enolpyruvyl moiety of phosphoenolpyruvate (PEP) to the 5-hydroxyl of shikimate-3-phosphate (S3P) to produce enolpyruvyl shikimate-3-phosphate and inorganic phosphate. The chain is 3-phosphoshikimate 1-carboxyvinyltransferase from Streptococcus pyogenes serotype M2 (strain MGAS10270).